We begin with the raw amino-acid sequence, 127 residues long: Large ribosomal subunit protein bL12 (127 aa).

Belongs to the bacterial ribosomal protein bL12 family. Homodimer. Part of the ribosomal stalk of the 50S ribosomal subunit. Forms a multimeric L10(L12)X complex, where L10 forms an elongated spine to which 2 to 4 L12 dimers bind in a sequential fashion. Binds GTP-bound translation factors.

In terms of biological role, forms part of the ribosomal stalk which helps the ribosome interact with GTP-bound translation factors. Is thus essential for accurate translation. The sequence is that of Large ribosomal subunit protein bL12 from Symbiobacterium thermophilum (strain DSM 24528 / JCM 14929 / IAM 14863 / T).